Consider the following 186-residue polypeptide: Ribosome-recycling factor (186 aa).

The protein belongs to the RRF family.

It is found in the cytoplasm. Functionally, responsible for the release of ribosomes from messenger RNA at the termination of protein biosynthesis. May increase the efficiency of translation by recycling ribosomes from one round of translation to another. This is Ribosome-recycling factor from Phocaeicola vulgatus (strain ATCC 8482 / DSM 1447 / JCM 5826 / CCUG 4940 / NBRC 14291 / NCTC 11154) (Bacteroides vulgatus).